Reading from the N-terminus, the 384-residue chain is Spermidine/putrescine import ATP-binding protein PotA (384 aa).

Positions 26–260 (ISLEKVSKTY…PATRFVAGFI (235 aa)) constitute an ABC transporter domain. Position 62-69 (62-69 (GPSGCGKT)) interacts with ATP.

This sequence belongs to the ABC transporter superfamily. Spermidine/putrescine importer (TC 3.A.1.11.1) family. As to quaternary structure, the complex is composed of two ATP-binding proteins (PotA), two transmembrane proteins (PotB and PotC) and a solute-binding protein (PotD).

Its subcellular location is the cell membrane. It catalyses the reaction ATP + H2O + polyamine-[polyamine-binding protein]Side 1 = ADP + phosphate + polyamineSide 2 + [polyamine-binding protein]Side 1.. Functionally, part of the ABC transporter complex PotABCD involved in spermidine/putrescine import. Responsible for energy coupling to the transport system. This Thermobifida fusca (strain YX) protein is Spermidine/putrescine import ATP-binding protein PotA.